The primary structure comprises 1223 residues: RNA-binding protein 20 (1223 aa).

Disordered stretches follow at residues 1-59 (MVLA…QAGL), 238-288 (QAYG…PTSQ), and 306-381 (GEVG…GARR). Residues 29 to 57 (APAPPAPPGPRGMQPPPPPPPPPPPPPQA) show a composition bias toward pro residues. Polar residues-rich tracts occupy residues 238 to 261 (QAYG…SGSV) and 314 to 331 (GPNS…QSKP). Residues 410–444 (HLPHICSICDKKVFDLKDWELHVKGKLHAQKCLLF) form a U1-type zinc finger. One can recognise an RRM domain in the interval 520–595 (RVVHICNLPE…EKLLIRMSKR (76 aa)). A compositionally biased stretch (basic and acidic residues) spans 626–636 (EADRYGPERPR). Disordered stretches follow at residues 626 to 902 (EADR…TNME), 971 to 995 (EISL…DVEM), and 1042 to 1102 (MSSP…STQE). An RS region spans residues 630 to 657 (YGPERPRSRSPVSRSLSPRSHTPSFTSC). Phosphoserine is present on residues S637, S639, S642, S644, S662, and S681. Low complexity predominate over residues 638 to 662 (RSPVSRSLSPRSHTPSFTSCSSSHS). 2 stretches are compositionally biased toward basic and acidic residues: residues 676–711 (DSWE…MWAH) and 718–737 (RQVD…GYRE). Low complexity predominate over residues 742–752 (SGSPSSLHSVS). S744 bears the Phosphoserine mark. Composition is skewed to basic and acidic residues over residues 755-774 (KSRE…DKYL) and 786-852 (RKDE…KEEQ). Residues S803, S861, S872, S887, S889, S973, S976, and S1044 each carry the phosphoserine modification. Over residues 864–884 (RQEKETESSDAENTRTRKEQD) the composition is skewed to basic and acidic residues. Over residues 1083–1102 (STPTETDLQSQACQGVSTQE) the composition is skewed to polar residues. Phosphoserine is present on residues S1111 and S1116. Residues 1157–1188 (FYCKLCGLFYTSEEMAKMSHCRSAVHYRNLQK) form a Matrin-type zinc finger. Residues 1197-1223 (GLKETEGAGSPRPEDSGIVPHFERKKL) are disordered. A Phosphoserine modification is found at S1206.

As to quaternary structure, associates with components of the U1 and U2 U1 small nuclear ribonucleoprotein complexes. Phosphorylation regulates the subcellular localization. Phosphorylation of Ser-637 and Ser-639 in the RS (arginine/serine-rich) region promotes nuclear localization of the protein. In contrast, phosphorylation of the C-terminal disordered region promotes localization to cytoplasmic ribonucleoprotein granules.

Its subcellular location is the nucleus. It is found in the cytoplasm. It localises to the cytoplasmic ribonucleoprotein granule. Its function is as follows. RNA-binding protein that acts as a regulator of mRNA splicing of a subset of genes encoding key structural proteins involved in cardiac development, such as TTN (Titin), CACNA1C, CAMK2D or PDLIM5/ENH. Acts as a repressor of mRNA splicing: specifically binds the 5'UCUU-3' motif that is predominantly found within intronic sequences of pre-mRNAs, leading to the exclusion of specific exons in target transcripts. RBM20-mediated exon skipping is hormone-dependent and is essential for TTN isoform transition in both cardiac and skeletal muscles. RBM20-mediated exon skipping of TTN provides substrates for the formation of circular RNA (circRNAs) from the TTN transcripts. Together with RBM24, promotes the expression of short isoforms of PDLIM5/ENH in cardiomyocytes. This is RNA-binding protein 20 from Sus scrofa (Pig).